A 314-amino-acid chain; its full sequence is Polyadenylate-binding protein-interacting protein 8 (314 aa).

A disordered region spans residues 1-47 (MAAITEMATDSNDVINDGGTGDGIEKSTDSKPEIESDDLKPKSKPEY). Over residues 23–47 (GIEKSTDSKPEIESDDLKPKSKPEY) the composition is skewed to basic and acidic residues. The PAM2-like signature appears at 59 to 69 (KLNPEAKEFFP). The Bipartite nuclear localization signal motif lies at 99–112 (RRRRNNYNQGRRVR). 2 RRM domains span residues 128 to 203 (RTVY…PSKT) and 225 to 301 (RTIY…PSKT).

Interacts with MPC. Expressed in cauline leaves, stems, rosette leaves, immature siliques and primary inflorescences but at a low level.

It is found in the nucleus. The sequence is that of Polyadenylate-binding protein-interacting protein 8 (CID8) from Arabidopsis thaliana (Mouse-ear cress).